A 438-amino-acid polypeptide reads, in one-letter code: MTDYRGEQVVIIGLGLTGLSCVDFLRRRGVTPRVMDTRFTPPGLEKLPADVPRHLGSLHEQWLLDATLIVTSPGVPLSHPALAEAAAAGVAIIGDIELFAREASAPVVAITGSNGKSTVTCMVGEMAAAAGWQVGVGGNIGLPALTLLDSPCQLYVLELSSFQLETTHSLKAAAATVLNISEDHMNRYPLGLQQYRAAKLKIYHDAAVCVVNAEDALTLPVRGHDARCISFGAERGDYCLRRHAGQTWLMARGEPLLEGAELRVGGRHNYTNALAALALSDALGIPSAASLAALRQFRGLTHRFELVHERRGVRWINDSKATNVGSTEAALNGLEVVGTLHLLLGGDGKSADFTPLTPWLQGDRVQLYCFGQDGAQLASLCPEAATLTETLEQAMRIIGSRVRAGDLVLLSPASASLDQFSNFEVRGDVFTRLAREVG.

Residue 112 to 118 coordinates ATP; sequence GSNGKST.

This sequence belongs to the MurCDEF family.

It localises to the cytoplasm. It carries out the reaction UDP-N-acetyl-alpha-D-muramoyl-L-alanine + D-glutamate + ATP = UDP-N-acetyl-alpha-D-muramoyl-L-alanyl-D-glutamate + ADP + phosphate + H(+). It functions in the pathway cell wall biogenesis; peptidoglycan biosynthesis. Functionally, cell wall formation. Catalyzes the addition of glutamate to the nucleotide precursor UDP-N-acetylmuramoyl-L-alanine (UMA). This is UDP-N-acetylmuramoylalanine--D-glutamate ligase from Sodalis glossinidius (strain morsitans).